Here is a 990-residue protein sequence, read N- to C-terminus: Pro-apoptotic serine protease NMA111 (990 aa).

The tract at residues 1 to 32 (MSVTNSNRKRSLSEVSEGSDPEAPAKTRNSYT) is disordered. A serine protease region spans residues 73–263 (VVSIHFSQVA…LPLDRILRAL (191 aa)). Catalysis depends on charge relay system residues His-111, Asp-142, and Ser-225. PDZ domains lie at 290–368 (RRLG…QRGG) and 758–843 (SILT…VREG).

Belongs to the peptidase S1C family.

It localises to the nucleus. In terms of biological role, nuclear serine protease which mediates apoptosis. The polypeptide is Pro-apoptotic serine protease NMA111 (NMA111) (Vanderwaltozyma polyspora (strain ATCC 22028 / DSM 70294 / BCRC 21397 / CBS 2163 / NBRC 10782 / NRRL Y-8283 / UCD 57-17) (Kluyveromyces polysporus)).